Consider the following 182-residue polypeptide: Adenine phosphoribosyltransferase (182 aa).

It belongs to the purine/pyrimidine phosphoribosyltransferase family. In terms of assembly, homodimer.

Its subcellular location is the cytoplasm. It catalyses the reaction AMP + diphosphate = 5-phospho-alpha-D-ribose 1-diphosphate + adenine. The protein operates within purine metabolism; AMP biosynthesis via salvage pathway; AMP from adenine: step 1/1. Its function is as follows. Catalyzes a salvage reaction resulting in the formation of AMP, that is energically less costly than de novo synthesis. This chain is Adenine phosphoribosyltransferase, found in Bordetella pertussis (strain Tohama I / ATCC BAA-589 / NCTC 13251).